The following is a 493-amino-acid chain: Cytochrome c-552 (493 aa).

Residues 1-25 form the signal peptide; it reads MEKKLKSWQGWLLSGGSMVVVFVLG. His116 provides a ligand contact to heme c. Positions 144, 147, and 148 each coordinate heme. 6 residues coordinate heme c: Cys182, Cys185, His186, Cys224, Cys227, and His228. Residues Glu230, Tyr231, Lys276, and Gln278 each coordinate Ca(2+). Tyr231 is a substrate binding site. His279 is a substrate binding site. Heme c contacts are provided by His290, Cys297, Cys300, His301, His315, Cys328, Cys331, His332, and His407.

Belongs to the cytochrome c-552 family. Ca(2+) is required as a cofactor. It depends on heme c as a cofactor.

It is found in the periplasm. The catalysed reaction is 6 Fe(III)-[cytochrome c] + NH4(+) + 2 H2O = 6 Fe(II)-[cytochrome c] + nitrite + 8 H(+). It participates in nitrogen metabolism; nitrate reduction (assimilation). Catalyzes the reduction of nitrite to ammonia, consuming six electrons in the process. In Bacteroides thetaiotaomicron (strain ATCC 29148 / DSM 2079 / JCM 5827 / CCUG 10774 / NCTC 10582 / VPI-5482 / E50), this protein is Cytochrome c-552.